The following is a 133-amino-acid chain: Small ribosomal subunit protein uS9 (133 aa).

Positions 111–133 are disordered; the sequence is PRRSESKKFGGPGARARKQKSYR.

The protein belongs to the universal ribosomal protein uS9 family.

This Methanosphaera stadtmanae (strain ATCC 43021 / DSM 3091 / JCM 11832 / MCB-3) protein is Small ribosomal subunit protein uS9.